We begin with the raw amino-acid sequence, 209 residues long: Orotate phosphoribosyltransferase (209 aa).

5-phospho-alpha-D-ribose 1-diphosphate contacts are provided by residues R96, K100, H102, and 122–130; that span reads EDLISTGGS. Residue S126 coordinates orotate.

It belongs to the purine/pyrimidine phosphoribosyltransferase family. PyrE subfamily. Homodimer. Mg(2+) is required as a cofactor.

The enzyme catalyses orotidine 5'-phosphate + diphosphate = orotate + 5-phospho-alpha-D-ribose 1-diphosphate. It functions in the pathway pyrimidine metabolism; UMP biosynthesis via de novo pathway; UMP from orotate: step 1/2. In terms of biological role, catalyzes the transfer of a ribosyl phosphate group from 5-phosphoribose 1-diphosphate to orotate, leading to the formation of orotidine monophosphate (OMP). This is Orotate phosphoribosyltransferase from Listeria monocytogenes serovar 1/2a (strain ATCC BAA-679 / EGD-e).